A 497-amino-acid polypeptide reads, in one-letter code: FAD-linked oxidoreductase fogF (497 aa).

The N-terminal stretch at 1–18 is a signal peptide; sequence MRRNILTALACSWLTAHA. The region spanning 59–229 is the FAD-binding PCMH-type domain; that stretch reads NAPTYAGAIS…TSATYKLHKL (171 aa).

This sequence belongs to the oxygen-dependent FAD-linked oxidoreductase family. FAD serves as cofactor.

It participates in secondary metabolite biosynthesis. Functionally, FAD-linked oxidoreductase; part of the gene cluster that mediates the biosynthesis of flavoglaucin and congeners (including aspergin, dihydroauroglaucin and auroglaucin), prenylated salicylaldehyde derivatives carrying a saturated or an unsaturated C-7 side chain. The PKS fogA releases the carboxylic acid (8E,10E,12E)-3,5,7-trihydroxytetradeca-8,10,12-trienoic acid as its product, as well as derivatives with one and two double bonds. FogA is indeed able to reduce the initial triketide, thus being at least partially responsible for the differently saturated heptyl side chains of flavoglaucin congeners. The oxidoreductases fogB, fogC and fogD modify the nascent polyketide in fogA-bound form and, together, fogA, fogB, fogC and fogD are necessary for the formation of the aromatic core and the cyclized PKS products are released as salicyl alcohols. In particular, fogB is responsible for oxidation of a hydroxyl group or reduction of remaining double bond(s) at the C-7 residue whereas fogD is probably involved in the reductive release of the modified PKS products. The cytochrome P450 monooxygenase fogE is then responsible for the hydroxylation at C-3 of the benzene ring. The fogE products are substrates of the prenyltransferase fogH and the prenylated benzyl alcohols are subsequently oxidized by the fogF to produce the final aryl aldehydes flavoglaucin and congeners. The short-chain dehydrogenase fogG does not seem to be involved in the biosynthesis of the prenylated salicylaldehyde derivatives. This Aspergillus ruber (strain CBS 135680) protein is FAD-linked oxidoreductase fogF.